Here is a 193-residue protein sequence, read N- to C-terminus: Cysteine and glycine-rich protein 1 (193 aa).

Residues 10-61 (CGVCQKTVYFAEEVQCEGNSFHKSCFLCMVCKKNLDSTTVAVHGEEIYCKSC) enclose the LIM zinc-binding 1 domain. The short motif at 64–69 (KKYGPK) is the Nuclear localization signal element. The residue at position 81 (Ser81) is a Phosphoserine. Lys84 carries the N6-acetyllysine modification. Lys91 is covalently cross-linked (Glycyl lysine isopeptide (Lys-Gly) (interchain with G-Cter in SUMO2)). Lys112, Lys131, Lys137, and Lys161 each carry N6-acetyllysine. Residues 119–170 (CPRCSQAVYAAEKVIGAGKSWHKACFRCAKCGKGLESTTLADKDGEIYCKGC) form the LIM zinc-binding 2 domain. Ser192 bears the Phosphoserine mark.

In terms of assembly, interacts with ASCC1; ASCC2 and TRIP4.

The protein resides in the nucleus. Functionally, could play a role in neuronal development. The polypeptide is Cysteine and glycine-rich protein 1 (CSRP1) (Homo sapiens (Human)).